A 421-amino-acid chain; its full sequence is ATP-dependent RNA helicase RhlB (421 aa).

Positions 9–37 (QKFSDFALHPKVVEALEKKGFHNCTPIQA) match the Q motif motif. One can recognise a Helicase ATP-binding domain in the interval 40–219 (LPLTLAGRDV…FEQMNNAEYI (180 aa)). 53 to 60 (AQTGTGKT) provides a ligand contact to ATP. A DEAD box motif is present at residues 165–168 (DEAD). Positions 245-390 (RLLQTLIEEE…VSKYNPDALM (146 aa)) constitute a Helicase C-terminal domain. Residues 392-421 (DLPKPLRLTRPRTGNGPRRTGAPRNRRRSG) form a disordered region. Low complexity predominate over residues 402-414 (PRTGNGPRRTGAP).

Belongs to the DEAD box helicase family. RhlB subfamily. Component of the RNA degradosome, which is a multiprotein complex involved in RNA processing and mRNA degradation.

The protein resides in the cytoplasm. It carries out the reaction ATP + H2O = ADP + phosphate + H(+). Functionally, DEAD-box RNA helicase involved in RNA degradation. Has RNA-dependent ATPase activity and unwinds double-stranded RNA. The sequence is that of ATP-dependent RNA helicase RhlB from Escherichia coli (strain SMS-3-5 / SECEC).